A 291-amino-acid chain; its full sequence is Prepilin leader peptidase/N-methyltransferase (291 aa).

Residues 14–34 traverse the membrane as a helical segment; sequence LYFSLVFLFSLMIGSFLNVVI. The Zn(2+) site is built by C75, C78, C100, and C103. 6 helical membrane-spanning segments follow: residues 107 to 127, 131 to 151, 162 to 182, 186 to 206, 232 to 252, and 262 to 282; these read ISARYPLVELLTALLSVVVAM, PGWGTLAALLLTWVLVALTFI, LTLPLLWGGLLFNLLGGYVPL, VIGAMAGYLVLWSLYWAFKLL, LPIVLLLSSLVGAIFGIGLIL, and IPFGPYLAIAGWIALLWGDSI.

This sequence belongs to the peptidase A24 family. The cofactor is Zn(2+).

It localises to the cell inner membrane. The catalysed reaction is Typically cleaves a -Gly-|-Phe- bond to release an N-terminal, basic peptide of 5-8 residues from type IV prepilin, and then N-methylates the new N-terminal amino group, the methyl donor being S-adenosyl-L-methionine.. Plays an essential role in type IV pili and type II pseudopili formation by proteolytically removing the leader sequence from substrate proteins and subsequently monomethylating the alpha-amino group of the newly exposed N-terminal phenylalanine. The protein is Prepilin leader peptidase/N-methyltransferase (tapD) of Aeromonas salmonicida (strain A449).